Here is a 122-residue protein sequence, read N- to C-terminus: Prefoldin subunit 1 (122 aa).

At Ala2 the chain carries N-acetylalanine.

Belongs to the prefoldin subunit beta family. As to quaternary structure, heterohexamer of two PFD-alpha type and four PFD-beta type subunits.

In terms of biological role, binds specifically to cytosolic chaperonin (c-CPN) and transfers target proteins to it. Binds to nascent polypeptide chain and promotes folding in an environment in which there are many competing pathways for nonnative proteins. The protein is Prefoldin subunit 1 (PFDN1) of Bos taurus (Bovine).